A 75-amino-acid polypeptide reads, in one-letter code: Large ribosomal subunit protein bL31 (75 aa).

Belongs to the bacterial ribosomal protein bL31 family. Type A subfamily. As to quaternary structure, part of the 50S ribosomal subunit.

Its function is as follows. Binds the 23S rRNA. This is Large ribosomal subunit protein bL31 from Pelodictyon phaeoclathratiforme (strain DSM 5477 / BU-1).